Here is a 339-residue protein sequence, read N- to C-terminus: Phenylalanine--tRNA ligase alpha subunit (339 aa).

E254 provides a ligand contact to Mg(2+).

This sequence belongs to the class-II aminoacyl-tRNA synthetase family. Phe-tRNA synthetase alpha subunit type 1 subfamily. As to quaternary structure, tetramer of two alpha and two beta subunits. The cofactor is Mg(2+).

The protein resides in the cytoplasm. The catalysed reaction is tRNA(Phe) + L-phenylalanine + ATP = L-phenylalanyl-tRNA(Phe) + AMP + diphosphate + H(+). The polypeptide is Phenylalanine--tRNA ligase alpha subunit (Clostridium botulinum (strain Alaska E43 / Type E3)).